The chain runs to 272 residues: uncharacterized protein (272 aa).

The next 4 helical transmembrane spans lie at 9-29 (PVGF…GSGV), 38-58 (LTSF…SFPP), 154-174 (AGEF…VLML), and 188-208 (AIAL…FNPI). Over 209–272 (AAKLEEKTES…KTKKGSVHEA (64 aa)) the chain is Cytoplasmic.

Belongs to the MotA family.

The protein resides in the cell membrane. May be involved in some transport function. This is an uncharacterized protein from Bacillus subtilis (strain 168).